The chain runs to 32 residues: Photosystem II reaction center protein T (32 aa).

The chain crosses the membrane as a helical span at residues Ala-3 to Phe-23.

Belongs to the PsbT family. In terms of assembly, PSII is composed of 1 copy each of membrane proteins PsbA, PsbB, PsbC, PsbD, PsbE, PsbF, PsbH, PsbI, PsbJ, PsbK, PsbL, PsbM, PsbT, PsbX, PsbY, Psb30/Ycf12, peripheral proteins PsbO, CyanoQ (PsbQ), PsbU, PsbV and a large number of cofactors. It forms dimeric complexes.

It localises to the cellular thylakoid membrane. Found at the monomer-monomer interface of the photosystem II (PS II) dimer, plays a role in assembly and dimerization of PSII. PSII is a light-driven water plastoquinone oxidoreductase, using light energy to abstract electrons from H(2)O, generating a proton gradient subsequently used for ATP formation. This is Photosystem II reaction center protein T from Prochlorococcus marinus (strain MIT 9301).